The sequence spans 137 residues: Probable histone H2AXa (137 aa).

Gly residues predominate over residues 1–10 (MSSSQGGGGR). The tract at residues 1 to 21 (MSSSQGGGGRGKAKTTKAVSR) is disordered. S134 is subject to Phosphoserine; by ATM and ATR. The [ST]-Q motif motif lies at 134–135 (SQ).

Belongs to the histone H2A family. The nucleosome is a histone octamer containing two molecules each of H2A, H2B, H3 and H4 assembled in one H3-H4 heterotetramer and two H2A-H2B heterodimers. The octamer wraps approximately 147 bp of DNA. Interacts with numerous proteins required for DNA damage signaling and repair when phosphorylated on Ser-134. Post-translationally, phosphorylated to form H2AXS139ph (gamma-H2AX) in response to DNA double strand breaks (DSBs) generated by exogenous genotoxic agents and by stalled replication forks, and may also occur during meiotic recombination events. Phosphorylation can extend up to several thousand nucleosomes from the actual site of the DSB and may mark the surrounding chromatin for recruitment of proteins required for DNA damage signaling and repair. Widespread phosphorylation may also serve to amplify the damage signal or aid repair of persistent lesions. H2AXS139ph in response to ionizing radiation is mediated by ATM while defects in DNA replication induce H2AXS139ph subsequent to activation of ATR. Dephosphorylation of H2AXS139ph by PP2A is required for DNA DSB repair.

Its subcellular location is the nucleus. The protein resides in the chromosome. In terms of biological role, variant histone H2A which replaces conventional H2A in a subset of nucleosomes. Nucleosomes wrap and compact DNA into chromatin, limiting DNA accessibility to the cellular machineries which require DNA as a template. Histones thereby play a central role in transcription regulation, DNA repair, DNA replication and chromosomal stability. DNA accessibility is regulated via a complex set of post-translational modifications of histones, also called histone code, and nucleosome remodeling. Required for checkpoint-mediated arrest of cell cycle progression in response to low doses of ionizing radiation and for efficient repair of DNA double strand breaks (DSBs) specifically when modified by C-terminal phosphorylation. The chain is Probable histone H2AXa from Oryza sativa subsp. indica (Rice).